The chain runs to 402 residues: Phosphoglycerate kinase (402 aa).

Substrate contacts are provided by residues 24 to 26 (DFN), Arg-40, 63 to 66 (HFGR), Arg-122, and Arg-155. ATP contacts are provided by residues Lys-206, Gly-297, Glu-328, and 357–360 (GGDS).

This sequence belongs to the phosphoglycerate kinase family. Monomer.

The protein localises to the cytoplasm. It carries out the reaction (2R)-3-phosphoglycerate + ATP = (2R)-3-phospho-glyceroyl phosphate + ADP. It participates in carbohydrate degradation; glycolysis; pyruvate from D-glyceraldehyde 3-phosphate: step 2/5. In Parasynechococcus marenigrum (strain WH8102), this protein is Phosphoglycerate kinase.